A 568-amino-acid polypeptide reads, in one-letter code: Phosphoprotein (568 aa).

2 disordered regions span residues 1–23 and 38–320; these read MDQDAFILKEDSEVEREAPGGRE and SEPT…GIGE. Residues 7–20 are compositionally biased toward basic and acidic residues; sequence ILKEDSEVEREAPG. Residues 33 to 41 form an N0 binding region; that stretch reads DAVLSSEPT. Residues 50–59 are compositionally biased toward polar residues; that stretch reads LHNTINTPQG. Phosphoserine; by host is present on serine 68. The segment covering 83-101 has biased composition (basic and acidic residues); the sequence is RSGEESRVSGRTSKPEAEA. Serine 125 is subject to Phosphoserine; by host. The span at 150 to 168 shows a compositional bias: basic and acidic residues; that stretch reads GIEDENREMAAHPDKRGED. Residues 191–206 show a composition bias toward polar residues; that stretch reads ASNNGRSMEPGSSHSA. Residues serine 192, serine 249, serine 257, and serine 260 each carry the phosphoserine; by host modification. Positions 344–411 are multimerization; it reads FESSRDASYV…SFRDTYKRFS (68 aa). Residues 364 to 429 adopt a coiled-coil conformation; that stretch reads YAEMTFNVCG…LLMSNLSTLH (66 aa). Residues 412 to 445 are l protein binding; the sequence is EYQKEQNSLLMSNLSTLHIITDRGGKTDNTDSLT. Phosphoserine; by host is present on residues serine 447 and serine 449. Residues 479 to 568 form an interaction with the nucleocapsid (N-RNA) region; sequence DLIREDEFRD…VEEDIESLTN (90 aa). The disordered stretch occupies residues 496–516; that stretch reads QERDTEPRASNASRLLPSKEK.

The protein belongs to the respirovirus P protein family. As to quaternary structure, homotetramer. Interacts (via multimerization domain) with polymerase L; this interaction forms the polymerase complex. Interacts (via N-terminus) with N0; this interaction allows P to chaperon N0 before encapsidation and form the N-P complex. Interacts (via C-terminus) with N-RNA template; this interaction positions the polymerase on the template. Post-translationally, phosphorylated by PKC/PRKCZ, and other unknown kinases. Phosphorylation is necessary for viral transcription and replication. The N-terminus contains the majority of phosphorylated sites. Ser-249 is the major site of phosphorylation, but is not necessary for most functions.

In terms of biological role, essential cofactor of the RNA polymerase L that plays a central role in the transcription and replication by forming the polymerase complex with RNA polymerase L and recruiting L to the genomic N-RNA template for RNA synthesis. Also plays a central role in the encapsidation of nascent RNA chains by forming the encapsidation complex with the nucleocapsid protein N (N-P complex). Acts as a chaperone for newly synthesized free N protein, so-called N0, allowing encapsidation of nascent RNA chains during replication. The nucleoprotein protein N prevents excessive phosphorylation of P, which leads to down-regulation of viral transcription/ replication. Participates, together with N, in the formation of viral factories (viroplasms), which are large inclusions in the host cytoplasm where replication takes place. Recruits host PI4KB and remodel the host endoplasmic reticulum membrane to form viral replication factories. The polypeptide is Phosphoprotein (P/V/C) (Sendai virus (strain Z) (SeV)).